We begin with the raw amino-acid sequence, 69 residues long: Cytochrome c oxidase subunit 8A, mitochondrial (69 aa).

The transit peptide at 1–25 directs the protein to the mitochondrion; sequence MYVVTPLLLRGLTGSARRLPVPRAQ. The SIFI-degron signature appears at 2-19; that stretch reads YVVTPLLLRGLTGSARRL. The Mitochondrial matrix portion of the chain corresponds to 26-36; it reads VHSMPPEQKLG. Residues 37–60 form a helical membrane-spanning segment; sequence VLELAIGFTSCMVTFLLPAGWIMS. Residues 61-69 are Mitochondrial intermembrane-facing; that stretch reads HLESYKKRG.

This sequence belongs to the cytochrome c oxidase VIII family. In terms of assembly, component of the cytochrome c oxidase (complex IV, CIV), a multisubunit enzyme composed of 14 subunits. The complex is composed of a catalytic core of 3 subunits MT-CO1, MT-CO2 and MT-CO3, encoded in the mitochondrial DNA, and 11 supernumerary subunits COX4I, COX5A, COX5B, COX6A, COX6B, COX6C, COX7A, COX7B, COX7C, COX8 and NDUFA4, which are encoded in the nuclear genome. The complex exists as a monomer or a dimer and forms supercomplexes (SCs) in the inner mitochondrial membrane with NADH-ubiquinone oxidoreductase (complex I, CI) and ubiquinol-cytochrome c oxidoreductase (cytochrome b-c1 complex, complex III, CIII), resulting in different assemblies (supercomplex SCI(1)III(2)IV(1) and megacomplex MCI(2)III(2)IV(2)). Post-translationally, in response to mitochondrial stress, the precursor protein is ubiquitinated by the SIFI complex in the cytoplasm before mitochondrial import, leading to its degradation. Within the SIFI complex, UBR4 initiates ubiquitin chain that are further elongated or branched by KCMF1.

The protein resides in the mitochondrion inner membrane. The protein operates within energy metabolism; oxidative phosphorylation. Functionally, component of the cytochrome c oxidase, the last enzyme in the mitochondrial electron transport chain which drives oxidative phosphorylation. The respiratory chain contains 3 multisubunit complexes succinate dehydrogenase (complex II, CII), ubiquinol-cytochrome c oxidoreductase (cytochrome b-c1 complex, complex III, CIII) and cytochrome c oxidase (complex IV, CIV), that cooperate to transfer electrons derived from NADH and succinate to molecular oxygen, creating an electrochemical gradient over the inner membrane that drives transmembrane transport and the ATP synthase. Cytochrome c oxidase is the component of the respiratory chain that catalyzes the reduction of oxygen to water. Electrons originating from reduced cytochrome c in the intermembrane space (IMS) are transferred via the dinuclear copper A center (CU(A)) of subunit 2 and heme A of subunit 1 to the active site in subunit 1, a binuclear center (BNC) formed by heme A3 and copper B (CU(B)). The BNC reduces molecular oxygen to 2 water molecules using 4 electrons from cytochrome c in the IMS and 4 protons from the mitochondrial matrix. In Ateles belzebuth (White-bellied spider monkey), this protein is Cytochrome c oxidase subunit 8A, mitochondrial (COX8A).